We begin with the raw amino-acid sequence, 367 residues long: MLQKLVLDKLEEIEKRFKEIENLLTKEEIISDLSRYQSLLKERAKIEEIVEKFSEYKKLLKEREDLEVMTKEEQDEDLRSLAEAELEEIEKKLEKIEFDLKALLLPKDPNDEKNIIMEIRAGTGGEEAALFAADLFRMYVGYAQKKGWKVEIVSSNPTGLGGYKEIIFIVEGKGAYSRLKFESGVHRVQRVPITESSGRIHTSTATVAVLPEMEEVDVEIDPKDLRIETFRSGGAGGQHVNKTESGVRITHIPSGIVVQCQDERSQHQNREKAMKVLRARLYEYYQREKENEIASQRRQQVGTGERSEKIRTYNFPQRRVTDHRINYSSFQLEEVLSGELDEFIDRLILAEKEEQIKKLFEEVGATS.

Glutamine 238 carries the N5-methylglutamine modification.

Belongs to the prokaryotic/mitochondrial release factor family. In terms of processing, methylated by PrmC. Methylation increases the termination efficiency of RF1.

The protein resides in the cytoplasm. Peptide chain release factor 1 directs the termination of translation in response to the peptide chain termination codons UAG and UAA. In Dictyoglomus thermophilum (strain ATCC 35947 / DSM 3960 / H-6-12), this protein is Peptide chain release factor 1.